A 268-amino-acid chain; its full sequence is Imidazole glycerol phosphate synthase subunit HisF (268 aa).

Active-site residues include D12 and D131.

Belongs to the HisA/HisF family. Heterodimer of HisH and HisF.

The protein resides in the cytoplasm. It catalyses the reaction 5-[(5-phospho-1-deoxy-D-ribulos-1-ylimino)methylamino]-1-(5-phospho-beta-D-ribosyl)imidazole-4-carboxamide + L-glutamine = D-erythro-1-(imidazol-4-yl)glycerol 3-phosphate + 5-amino-1-(5-phospho-beta-D-ribosyl)imidazole-4-carboxamide + L-glutamate + H(+). Its pathway is amino-acid biosynthesis; L-histidine biosynthesis; L-histidine from 5-phospho-alpha-D-ribose 1-diphosphate: step 5/9. Its function is as follows. IGPS catalyzes the conversion of PRFAR and glutamine to IGP, AICAR and glutamate. The HisF subunit catalyzes the cyclization activity that produces IGP and AICAR from PRFAR using the ammonia provided by the HisH subunit. This chain is Imidazole glycerol phosphate synthase subunit HisF, found in Methanoculleus marisnigri (strain ATCC 35101 / DSM 1498 / JR1).